We begin with the raw amino-acid sequence, 340 residues long: Organic solute transporter subunit alpha (340 aa).

The Extracellular segment spans residues 1-48 (MEPGRTQIKLDPRYTADLLEVLKTNYGIPSACFSQPPTAAQLLRALGP). The chain crosses the membrane as a helical span at residues 49–69 (VELALTSILTLLALGSIAIFL). Residues 70–87 (EDAVYLYKNTLCPIKRRT) lie on the Cytoplasmic side of the membrane. Residues 88–108 (LLWKSSAPTVVSVLCCFGLWI) traverse the membrane as a helical segment. The Extracellular segment spans residues 109–118 (PRSLVLVEMT). The chain crosses the membrane as a helical span at residues 119–139 (ITSFYAVCFYLLMLVMVEGFG). At 140 to 181 (GKEAVLRTLRDTPMMVHTGPCCCCCPCCPRLLLTRKKLQLLM) the chain is on the cytoplasmic side. The helical transmembrane segment at 182-202 (LGPFQYAFLKITLTLVGLFLV) threads the bilayer. The Extracellular segment spans residues 203-218 (PDGIYDPADISEGSTA). Residues 219 to 239 (LWINTFLGVSTLLALWTLGII) form a helical membrane-spanning segment. Over 240-255 (SRQARLHLGEQNMGAK) the chain is Cytoplasmic. A helical membrane pass occupies residues 256–276 (FALFQVLLILTALQPSIFSVL). Residues 277-294 (ANGGQIACSPPYSSKTRS) are Extracellular-facing. The helical transmembrane segment at 295-317 (QVMNCHLLILETFLMTVLTRMYY) threads the bilayer. At 318–340 (RRKDHKVGYETFSSPDLDLNLKA) the chain is on the cytoplasmic side. Ser330 carries the phosphoserine modification.

Belongs to the OST-alpha family. In terms of assembly, interacts with SLC51B. The Ost-alpha/Ost-beta complex is a heterodimer composed of alpha (SLC51A) and beta (SLC51B) subunit. As to expression, widely expressed with a high expression in ileum. Expressed in testis, colon, liver, small intestine, kidney, ovary and adrenal gland; and at low levels in heart, lung, brain, pituitary, thyroid gland, uterus, prostate, mammary gland and fat.

Its subcellular location is the cell membrane. It localises to the endoplasmic reticulum membrane. It catalyses the reaction taurocholate(out) = taurocholate(in). It carries out the reaction estrone 3-sulfate(out) = estrone 3-sulfate(in). The catalysed reaction is dehydroepiandrosterone 3-sulfate(out) = dehydroepiandrosterone 3-sulfate(in). The enzyme catalyses tauroursodeoxycholate(out) = tauroursodeoxycholate(in). It catalyses the reaction glycoursodeoxycholate(out) = glycoursodeoxycholate(in). It carries out the reaction glycocholate(out) = glycocholate(in). The catalysed reaction is taurochenodeoxycholate(out) = taurochenodeoxycholate(in). The enzyme catalyses glycochenodeoxycholate(out) = glycochenodeoxycholate(in). It catalyses the reaction taurodeoxycholate(out) = taurodeoxycholate(in). It carries out the reaction glycodeoxycholate(out) = glycodeoxycholate(in). The catalysed reaction is prostaglandin E2(out) = prostaglandin E2(in). In terms of biological role, essential component of the Ost-alpha/Ost-beta complex, a heterodimer that acts as the intestinal basolateral transporter responsible for bile acid export from enterocytes into portal blood. Efficiently transports the major species of bile acids (taurocholate). Taurine conjugates are transported more efficiently across the basolateral membrane than glycine-conjugated bile acids. Can also transport steroids such as estrone 3-sulfate and dehydroepiandrosterone 3-sulfate, therefore playing a role in the enterohepatic circulation of sterols. Able to transport eicosanoids such as prostaglandin E2. The sequence is that of Organic solute transporter subunit alpha (SLC51A) from Homo sapiens (Human).